A 713-amino-acid chain; its full sequence is Glutamine-dependent NAD(+) synthetase (713 aa).

One can recognise a CN hydrolase domain in the interval 4-275; sequence VTLATCNLNQ…IEVITATVDL (272 aa). Catalysis depends on Glu-44, which acts as the Proton acceptor; for glutaminase activity. The active-site For glutaminase activity is the Lys-114. Residue Cys-175 is the Nucleophile; for glutaminase activity of the active site. Positions 324-703 are ligase; sequence YNTPAEEIGF…QRPQLKNTVN (380 aa). 354-361 provides a ligand contact to ATP; the sequence is PLSGGADS. Ser-356 is a catalytic residue.

It in the C-terminal section; belongs to the NAD synthetase family.

It catalyses the reaction deamido-NAD(+) + L-glutamine + ATP + H2O = L-glutamate + AMP + diphosphate + NAD(+) + H(+). It participates in cofactor biosynthesis; NAD(+) biosynthesis; NAD(+) from deamido-NAD(+) (L-Gln route): step 1/1. The sequence is that of Glutamine-dependent NAD(+) synthetase (nadsyn1) from Dictyostelium discoideum (Social amoeba).